A 152-amino-acid polypeptide reads, in one-letter code: Ribosome maturation factor RimP (152 aa).

Belongs to the RimP family.

The protein resides in the cytoplasm. Its function is as follows. Required for maturation of 30S ribosomal subunits. The polypeptide is Ribosome maturation factor RimP (Burkholderia orbicola (strain MC0-3)).